Consider the following 103-residue polypeptide: Co-chaperonin GroES (103 aa).

Belongs to the GroES chaperonin family. In terms of assembly, heptamer of 7 subunits arranged in a ring. Interacts with the chaperonin GroEL.

It is found in the cytoplasm. Its function is as follows. Together with the chaperonin GroEL, plays an essential role in assisting protein folding. The GroEL-GroES system forms a nano-cage that allows encapsulation of the non-native substrate proteins and provides a physical environment optimized to promote and accelerate protein folding. GroES binds to the apical surface of the GroEL ring, thereby capping the opening of the GroEL channel. The polypeptide is Co-chaperonin GroES (Parasynechococcus marenigrum (strain WH8102)).